Reading from the N-terminus, the 83-residue chain is Urotensin-2 (83 aa).

Positions 49-71 (EVLLEKQSLLNPFSRVFGIRKQF) are excised as a propeptide. Residues cysteine 77 and cysteine 82 are joined by a disulfide bond.

Belongs to the urotensin-2 family.

Its subcellular location is the secreted. Functionally, urotensin is found in the teleost caudal neurosecretory system. It has a suggested role in osmoregulation and as a corticotropin-releasing factor. The non-hormonal portion of this precursor may be a urotensin binding protein, urophysin. The chain is Urotensin-2 from Platichthys flesus (European flounder).